The sequence spans 677 residues: Transmembrane and coiled-coil domain-containing protein 3 (677 aa).

A signal peptide spans 1 to 22 (MKVLGRSFFWVLFPVLPWAVQA). Positions 124–204 (DYKDVVNMKE…EEEIEEHAFD (81 aa)) form a coiled coil. Residues Asn206 and Asn230 are each glycosylated (N-linked (GlcNAc...) asparagine). Helical transmembrane passes span 286 to 306 (WLCTAIGLPTMFGYIICGVLL), 317 to 337 (IVQVETLGEFGVFFTLFLVGL), 350 to 370 (ISLQGPCYMTLLMIAFGLLWG), 416 to 436 (VLLGMLVTQDVQLGLFMAVMP), 456 to 476 (ILVLIGQILFSLAAVFLLCLV), 498 to 518 (EILILGISAFIFLMLTVTELL), 554 to 574 (FLAIVFFASIGLHVFPTFVAY), 578 to 598 (VLVFLTLSVVVMKFLLAALVL), 608 to 628 (YIKWIVSAGLAQVSEFSFVLG), and 640 to 660 (EVYLLILSVTTLSLLLAPVLW).

This sequence belongs to the monovalent cation:proton antiporter 2 (CPA2) transporter (TC 2.A.37) family. As to expression, expressed in the cornea, lens capsule and choroid-retinal pigment epithelium (at protein level).

It is found in the membrane. Its function is as follows. Probable Na(+)/H(+) antiporter. The polypeptide is Transmembrane and coiled-coil domain-containing protein 3 (TMCO3) (Homo sapiens (Human)).